The sequence spans 421 residues: MSNQRKRSNDEREEEDDEDAEGIGEWERAYVDDRSWEELQEDESGLLRPIDNSAIYHAQYRRRLRMLSAAAAGTRIQKGLIRYLYIVIDFSRAAAEMDFRPSRMAIMAKHVEAFIREFFDQNPLSQIGLVSIKNGVAHTLTDLGGSPETHIKALMGKLEALGDSSLQNALELVHEHLNQVPSYGHREVLILYSALCTCDPGDIMETIQKCKKSKLRCSVIGLSAEMFICKHLCQETGGLYSVAVDEVHLKDLLLEHAPPPPAIAEFAIANLIKMGFPQRAAEGSMAICSCHKEVKIGAGYMCPRCKARVCDLPTECTICGLTLVSSPHLARSYHHLFPIAPFDEVPALSSLNDNRRKLGKSCFGCQQSLIGAGNKPVPCVTCRKCKHYFCLDCDIYIHESLHNCPGCESIHRPKSVSLMEE.

The segment at 1–26 (MSNQRKRSNDEREEEDDEDAEGIGEW) is disordered. Positions 11–24 (EREEEDDEDAEGIG) are enriched in acidic residues. Residues 83–272 (YLYIVIDFSR…IAEFAIANLI (190 aa)) enclose the VWFA domain. An RING-type zinc finger spans residues 362 to 408 (CFGCQQSLIGAGNKPVPCVTCRKCKHYFCLDCDIYIHESLHNCPGCE).

It belongs to the GTF2H2 family. In terms of assembly, component of the 7-subunit TFIIH core complex composed of XPB, XPD, TFB1/GTF2H1, GTF2H2/P44, TFB4/GTF2H3, TFB2/GTF2H4 and TFB5/GTF2H5, which is active in NER. The core complex associates with the 3-subunit CDK-activating kinase (CAK) module composed of CYCH1/cyclin H1, CDKD and MAT1/At4g30820 to form the 10-subunit holoenzyme (holo-TFIIH) active in transcription. Interacts with XPD.

It localises to the nucleus. Component of the general transcription and DNA repair factor IIH (TFIIH) core complex, which is involved in general and transcription-coupled nucleotide excision repair (NER) of damaged DNA and, when complexed to CAK, in RNA transcription by RNA polymerase II. In NER, TFIIH acts by opening DNA around the lesion to allow the excision of the damaged oligonucleotide and its replacement by a new DNA fragment. In transcription, TFIIH has an essential role in transcription initiation. When the pre-initiation complex (PIC) has been established, TFIIH is required for promoter opening and promoter escape. Phosphorylation of the C-terminal tail (CTD) of the largest subunit of RNA polymerase II by the kinase module CAK controls the initiation of transcription. Can restore UV resistance in the NER-deficient ssl1-1 yeast mutant. The polypeptide is General transcription factor IIH subunit 2 (Arabidopsis thaliana (Mouse-ear cress)).